Here is a 198-residue protein sequence, read N- to C-terminus: Peroxiredoxin-2 (198 aa).

Alanine 2 bears the N-acetylalanine mark. The Thioredoxin domain maps to 6 to 164; the sequence is AHIGKPAPDF…ALRLVQAFQY (159 aa). Cysteine 51 (cysteine sulfenic acid (-SOH) intermediate) is an active-site residue. Serine 112 carries the post-translational modification Phosphoserine. At threonine 182 the chain carries Phosphothreonine. At lysine 196 the chain carries N6-acetyllysine.

This sequence belongs to the peroxiredoxin family. AhpC/Prx1 subfamily. In terms of assembly, homodimer; disulfide-linked, upon oxidation. 5 homodimers assemble to form a ring-like decamer. Interacts with TIPIN. Post-translationally, the enzyme can be inactivated by further oxidation of the cysteine sulfenic acid (C(P)-SOH) to sulphinic acid (C(P)-SO2H) instead of its condensation to a disulfide bond. It can be reactivated by forming a transient disulfide bond with sulfiredoxin SRXN1, which reduces the cysteine sulfinic acid in an ATP- and Mg-dependent manner. Acetylation increases resistance to transition to high molecular-mass complexes. Deacetylated by HDAC6 which decreases reducing activity.

Its subcellular location is the cytoplasm. It carries out the reaction a hydroperoxide + [thioredoxin]-dithiol = an alcohol + [thioredoxin]-disulfide + H2O. Functionally, thiol-specific peroxidase that catalyzes the reduction of hydrogen peroxide and organic hydroperoxides to water and alcohols, respectively. Plays a role in cell protection against oxidative stress by detoxifying peroxides and as sensor of hydrogen peroxide-mediated signaling events. Might participate in the signaling cascades of growth factors and tumor necrosis factor-alpha by regulating the intracellular concentrations of H(2)O(2). The chain is Peroxiredoxin-2 (PRDX2) from Cricetulus griseus (Chinese hamster).